We begin with the raw amino-acid sequence, 96 residues long: MSAKIVVEVAYALPEKQYLQRVTLQEGATVEEAIRASGLLELRTDIDLAKNKVGIYSRPTKLADVVHDGDRVEIYRPLIADPKELRRQRAEKSANK.

Belongs to the UPF0125 (RnfH) family.

The polypeptide is Protein RnfH (Citrobacter koseri (strain ATCC BAA-895 / CDC 4225-83 / SGSC4696)).